A 331-amino-acid polypeptide reads, in one-letter code: Oxygen-evolving enhancer protein 1-2, chloroplastic (331 aa).

The N-terminal 57 residues, 1–57 (MATSLQAAATFLQPAKIAASPSRNVHLRSNQTVGKSFGLDSSQARLTCSLHSDLKDF), are a transit peptide targeting the chloroplast. Residues 58–84 (AGKCSDAAKIAGFALATSALVVSGAGA) constitute a thylakoid transit peptide.

This sequence belongs to the PsbO family.

The protein localises to the plastid. Its subcellular location is the chloroplast thylakoid membrane. Stabilizes the manganese cluster which is the primary site of water splitting. Regulates dephosphorylation and turnover of the PSII reaction center D1 protein. The sequence is that of Oxygen-evolving enhancer protein 1-2, chloroplastic (PSBO2) from Arabidopsis thaliana (Mouse-ear cress).